The primary structure comprises 778 residues: Endonuclease MutS2 (778 aa).

Position 328–335 (328–335 (GPNTGGKT)) interacts with ATP. The Smr domain maps to 702–777 (LDLRGKRYEE…GSGATIVTFK (76 aa)).

This sequence belongs to the DNA mismatch repair MutS family. MutS2 subfamily. Homodimer. Binds to stalled ribosomes, contacting rRNA.

In terms of biological role, endonuclease that is involved in the suppression of homologous recombination and thus may have a key role in the control of bacterial genetic diversity. Acts as a ribosome collision sensor, splitting the ribosome into its 2 subunits. Detects stalled/collided 70S ribosomes which it binds and splits by an ATP-hydrolysis driven conformational change. Acts upstream of the ribosome quality control system (RQC), a ribosome-associated complex that mediates the extraction of incompletely synthesized nascent chains from stalled ribosomes and their subsequent degradation. Probably generates substrates for RQC. In Streptococcus pneumoniae (strain ATCC 700669 / Spain 23F-1), this protein is Endonuclease MutS2.